Consider the following 95-residue polypeptide: Translation initiation factor 1A (95 aa).

Residues 7–81 enclose the S1-like domain; that stretch reads GRKNLRMPED…DKADVTWRYE (75 aa).

This sequence belongs to the eIF-1A family.

Seems to be required for maximal rate of protein biosynthesis. Enhances ribosome dissociation into subunits and stabilizes the binding of the initiator Met-tRNA(I) to 40 S ribosomal subunits. This chain is Translation initiation factor 1A (eIF1A), found in Halobacterium salinarum (strain ATCC 29341 / DSM 671 / R1).